The chain runs to 221 residues: Thiamine-phosphate synthase (221 aa).

4-amino-2-methyl-5-(diphosphooxymethyl)pyrimidine contacts are provided by residues 49 to 53 and asparagine 85; that span reads QFREK. Residues aspartate 86 and aspartate 105 each contribute to the Mg(2+) site. Residue serine 124 coordinates 4-amino-2-methyl-5-(diphosphooxymethyl)pyrimidine. 151–153 is a binding site for 2-[(2R,5Z)-2-carboxy-4-methylthiazol-5(2H)-ylidene]ethyl phosphate; it reads TQS. 4-amino-2-methyl-5-(diphosphooxymethyl)pyrimidine is bound at residue lysine 154. 2-[(2R,5Z)-2-carboxy-4-methylthiazol-5(2H)-ylidene]ethyl phosphate contacts are provided by residues glycine 183 and 203–204; that span reads IS.

Belongs to the thiamine-phosphate synthase family. The cofactor is Mg(2+).

It carries out the reaction 2-[(2R,5Z)-2-carboxy-4-methylthiazol-5(2H)-ylidene]ethyl phosphate + 4-amino-2-methyl-5-(diphosphooxymethyl)pyrimidine + 2 H(+) = thiamine phosphate + CO2 + diphosphate. The catalysed reaction is 2-(2-carboxy-4-methylthiazol-5-yl)ethyl phosphate + 4-amino-2-methyl-5-(diphosphooxymethyl)pyrimidine + 2 H(+) = thiamine phosphate + CO2 + diphosphate. It catalyses the reaction 4-methyl-5-(2-phosphooxyethyl)-thiazole + 4-amino-2-methyl-5-(diphosphooxymethyl)pyrimidine + H(+) = thiamine phosphate + diphosphate. The protein operates within cofactor biosynthesis; thiamine diphosphate biosynthesis; thiamine phosphate from 4-amino-2-methyl-5-diphosphomethylpyrimidine and 4-methyl-5-(2-phosphoethyl)-thiazole: step 1/1. Condenses 4-methyl-5-(beta-hydroxyethyl)thiazole monophosphate (THZ-P) and 2-methyl-4-amino-5-hydroxymethyl pyrimidine pyrophosphate (HMP-PP) to form thiamine monophosphate (TMP). The protein is Thiamine-phosphate synthase of Histophilus somni (strain 129Pt) (Haemophilus somnus).